The sequence spans 756 residues: Virulence factor MDV010 (756 aa).

Residues 1 to 30 (MPSKSIADHHAGYGVALAIVALLLIHGTAL) form the signal peptide. The interval 96-120 (EEHITLSSPRTSTKTTNENGHEKDS) is disordered. The segment covering 100 to 113 (TLSSPRTSTKTTNE) has biased composition (polar residues). N222, N241, N287, N423, N495, N542, N552, N580, N660, N684, N715, and N744 each carry an N-linked (GlcNAc...) asparagine; by host glycan.

It is found in the secreted. Its function is as follows. May play a role in host immune modulation since the protein is secreted and provides an advantage for growth in vivo while it is completely dispensable in cell culture. The sequence is that of Virulence factor MDV010 (MDV010) from Gallid herpesvirus 2 (strain Chicken/Md5/ATCC VR-987) (GaHV-2).